The sequence spans 54 residues: MHKTKSTRKIILVCEDCLSRNYSLNKSNLTQKERLEIKKFCSMCNKHTLHKETR.

This sequence belongs to the bacterial ribosomal protein bL33 family.

This Mesoplasma florum (strain ATCC 33453 / NBRC 100688 / NCTC 11704 / L1) (Acholeplasma florum) protein is Large ribosomal subunit protein bL33A.